The primary structure comprises 109 residues: Hainantoxin-XVIII-3 (109 aa).

The N-terminal stretch at 1-18 (MKLSIIIIATSLVIAVVA) is a signal peptide. Residues 19–46 (FPSKDSKAIENDKTEQRMEIVVQETARA) constitute a propeptide that is removed on maturation. 4 cysteine pairs are disulfide-bonded: Cys-47–Cys-62, Cys-55–Cys-68, Cys-59–Cys-108, and Cys-61–Cys-81.

This sequence belongs to the neurotoxin 25 family. F7 subfamily. Expressed by the venom gland.

The protein localises to the secreted. In terms of biological role, putative ion channel inhibitor. The sequence is that of Hainantoxin-XVIII-3 from Cyriopagopus hainanus (Chinese bird spider).